The following is a 122-amino-acid chain: Large ribosomal subunit protein bL12 (122 aa).

It belongs to the bacterial ribosomal protein bL12 family. Homodimer. Part of the ribosomal stalk of the 50S ribosomal subunit. Forms a multimeric L10(L12)X complex, where L10 forms an elongated spine to which 2 to 4 L12 dimers bind in a sequential fashion. Binds GTP-bound translation factors.

In terms of biological role, forms part of the ribosomal stalk which helps the ribosome interact with GTP-bound translation factors. Is thus essential for accurate translation. This is Large ribosomal subunit protein bL12 from Deinococcus geothermalis (strain DSM 11300 / CIP 105573 / AG-3a).